The following is a 380-amino-acid chain: MDFNLNDEQELFVAGIRELMASENWEAYFAECDRDSVYPERFVKALADMGIDCLLIPEEHGGLDAGFVTLAAVWMELGRLGAPTYVLYQLPGGFNTFLREGTQEQIDKIMAFRGTGKQMWNSAITEPGAGSDVGSLKTTYTRRNGKIYLNGSKCFITSSAYTPYIVVMARDGASPDKPVYTEWFVDMSKPGIKVTKLEKLGLRMDSCCEITFDDVELDEKDMFGREGNGFNRVKEEFDHERFLVALTNYGTAMCAFEDAARYANQRVQFGEAIGRFQLIQEKFAHMAIKLNSMKNMLYEAAWKADNGTITSGDAAMCKYFCANAAFEVVDSAMQVLGGVGIAGNHRISRFWRDLRVDRVSGGSDEMQILTLGRAVLKQYR.

This sequence belongs to the acyl-CoA dehydrogenase family. As to quaternary structure, homotetramer. The cofactor is FAD.

Its subcellular location is the cytoplasm. It carries out the reaction 4-(trimethylamino)butanoyl-CoA + oxidized [electron-transfer flavoprotein] + H(+) = crotonobetainyl-CoA + reduced [electron-transfer flavoprotein]. Its pathway is amine and polyamine metabolism; carnitine metabolism. Functionally, catalyzes the reduction of crotonobetainyl-CoA to gamma-butyrobetainyl-CoA. This chain is Crotonobetainyl-CoA reductase, found in Escherichia coli O6:K15:H31 (strain 536 / UPEC).